The following is a 353-amino-acid chain: DNA-directed RNA polymerase subunit alpha (353 aa).

Residues 1–245 (MEKIQKITYK…AHFQIIGNIN (245 aa)) form an alpha N-terminal domain (alpha-NTD) region. Residues 261-353 (EREIKSTTPI…QLNNSEEGEE (93 aa)) form an alpha C-terminal domain (alpha-CTD) region.

This sequence belongs to the RNA polymerase alpha chain family. Homodimer. The RNAP catalytic core consists of 2 alpha, 1 beta, 1 beta' and 1 omega subunit. When a sigma factor is associated with the core the holoenzyme is formed, which can initiate transcription.

The enzyme catalyses RNA(n) + a ribonucleoside 5'-triphosphate = RNA(n+1) + diphosphate. Functionally, DNA-dependent RNA polymerase catalyzes the transcription of DNA into RNA using the four ribonucleoside triphosphates as substrates. The sequence is that of DNA-directed RNA polymerase subunit alpha from Mycoplasma sp.